We begin with the raw amino-acid sequence, 98 residues long: Co-chaperonin GroES (98 aa).

This sequence belongs to the GroES chaperonin family. Heptamer of 7 subunits arranged in a ring. Interacts with the chaperonin GroEL.

The protein resides in the cytoplasm. Its function is as follows. Together with the chaperonin GroEL, plays an essential role in assisting protein folding. The GroEL-GroES system forms a nano-cage that allows encapsulation of the non-native substrate proteins and provides a physical environment optimized to promote and accelerate protein folding. GroES binds to the apical surface of the GroEL ring, thereby capping the opening of the GroEL channel. This is Co-chaperonin GroES from Agrobacterium fabrum (strain C58 / ATCC 33970) (Agrobacterium tumefaciens (strain C58)).